Here is a 232-residue protein sequence, read N- to C-terminus: uncharacterized protein (232 aa).

The disordered stretch occupies residues 1–71 (MSNPTIEGDE…KENERIKNDD (71 aa)). Positions 25–38 (DDLDDLDDILDDLD) are enriched in acidic residues. The span at 44 to 71 (KNEEKKNIDEHKQTGNTSKENERIKNDD) shows a compositional bias: basic and acidic residues.

This is an uncharacterized protein from Schizosaccharomyces pombe (strain 972 / ATCC 24843) (Fission yeast).